Here is a 193-residue protein sequence, read N- to C-terminus: MSSKTAIKDKWKLKKWFTIVAPKTFGEVVLGTTPAFDANQALNRKVETTLYDLTGDYSLVYVHLYFRVIGVEGDRLLTRFAGHELSRDYIRSLVRRKSSKIDAITDVTTKDGYVLRVKGLALTTYRAHRSQKTEIRKIIWNILSTRASETTFDEFVQDIVFGKLSNDIFQQAKKIYPLRKVEVEKTKLLKAPA.

It belongs to the eukaryotic ribosomal protein eS1 family.

This Sulfurisphaera tokodaii (strain DSM 16993 / JCM 10545 / NBRC 100140 / 7) (Sulfolobus tokodaii) protein is Small ribosomal subunit protein eS1.